The chain runs to 392 residues: Rhizopuspepsin-5 (392 aa).

The signal sequence occupies residues 1 to 21; sequence MKFSLISSCVALAVLVLSTEA. A propeptide spans 22–69 (activation peptide); that stretch reads APNGKKVNIPLTKNKDYKPNAKNAIQKVLAKYHRHRSTSSSSNSTSTD. The Peptidase A1 domain occupies 85-389; that stretch reads YFGQVKVGTP…NPTVPQVQIA (305 aa). D103 is an active-site residue. C116 and C119 are oxidised to a cystine. The active site involves D286. Cysteines 320 and 353 form a disulfide.

Belongs to the peptidase A1 family.

The catalysed reaction is Hydrolysis of proteins with broad specificity similar to that of pepsin A, preferring hydrophobic residues at P1 and P1'. Clots milk and activates trypsinogen. Does not cleave 4-Gln-|-His-5, but does cleave 10-His-|-Leu-11 and 12-Val-|-Glu-13 in B chain of insulin.. In Rhizopus niveus, this protein is Rhizopuspepsin-5.